The sequence spans 288 residues: Glucose-1-phosphate thymidylyltransferase (288 aa).

2 residues coordinate Mg(2+): D108 and D223.

It belongs to the glucose-1-phosphate thymidylyltransferase family. In terms of assembly, homotetramer. Mg(2+) is required as a cofactor.

The enzyme catalyses dTTP + alpha-D-glucose 1-phosphate + H(+) = dTDP-alpha-D-glucose + diphosphate. In terms of biological role, catalyzes the formation of dTDP-glucose, from dTTP and glucose 1-phosphate, as well as its pyrophosphorolysis. The polypeptide is Glucose-1-phosphate thymidylyltransferase (rmlA) (Neisseria gonorrhoeae).